A 331-amino-acid chain; its full sequence is Centriolar satellite-associated tubulin polyglutamylase complex regulator 1 (331 aa).

The required for interaction with PCM1 stretch occupies residues 1–111 (MLSPERLALP…HCLLQLLCPD (111 aa)). Residues 1 to 225 (MLSPERLALP…SCPPPALVKE (225 aa)) form a required for interaction with TPGS1, LRRC49, and TTLL1 region. The tract at residues 112-331 (FPLELTQKAA…STEETDESET (220 aa)) is required for interaction with TPGS2. Residues 288–331 (SPEASCLPSRTPPRVGSPWRPLHHSRKVDGESDGSTEETDESET) form a disordered region. Acidic residues predominate over residues 318–331 (ESDGSTEETDESET). Ser319 carries the post-translational modification Phosphoserine.

The protein belongs to the CSTPP1 family. Interacts with PCM1. Interacts with TTLL1, TPGS1, TPGS2 and LRRC49; the interactions link CSTPP1 to the complex TPGC. Binds to alpha-tubulin.

The protein resides in the cytoplasm. Its subcellular location is the cytoskeleton. It localises to the microtubule organizing center. It is found in the centrosome. The protein localises to the centriolar satellite. In terms of biological role, regulator of the tubulin polyglutamylase complex (TPGC) that controls cytoskeletal organization, nuclear shape, and cilium disassembly by balancing microtubule and actin assembly. Regulates the assembly and stability of the TPGC and thereby modulates polyglutamylation of the microtubule, which antagonizes MAP4 binding. The polypeptide is Centriolar satellite-associated tubulin polyglutamylase complex regulator 1 (CSTPP1) (Pongo abelii (Sumatran orangutan)).